The chain runs to 474 residues: Probable periplasmic serine endoprotease DegP-like (474 aa).

Residues 1–26 form the signal peptide; it reads MTRMTRHLALWMLLSLAILASQSAMA. Residues His-116, Asp-146, and Ser-219 each act as charge relay system in the active site. Substrate contacts are provided by residues 217–219 and 274–278; these read GNS and LGVMI. 2 PDZ domains span residues 263-354 and 360-462; these read LRND…LRNG and TVTV…YRSG.

It belongs to the peptidase S1C family.

Its subcellular location is the periplasm. It catalyses the reaction Acts on substrates that are at least partially unfolded. The cleavage site P1 residue is normally between a pair of hydrophobic residues, such as Val-|-Val.. In terms of biological role, might be efficient in the degradation of transiently denatured and unfolded proteins which accumulate in the periplasm following stress conditions. The polypeptide is Probable periplasmic serine endoprotease DegP-like (mucD) (Halomonas elongata (strain ATCC 33173 / DSM 2581 / NBRC 15536 / NCIMB 2198 / 1H9)).